A 144-amino-acid chain; its full sequence is L-fucose mutarotase (144 aa).

The active-site Proton donor is the His-22. Substrate-binding positions include Asp-30, Arg-109, and 131–133 (YGN).

Belongs to the RbsD / FucU family. FucU mutarotase subfamily. Homodecamer.

It is found in the cytoplasm. It carries out the reaction alpha-L-fucose = beta-L-fucose. It participates in carbohydrate metabolism; L-fucose metabolism. Its function is as follows. Involved in the anomeric conversion of L-fucose. The sequence is that of L-fucose mutarotase from Haemophilus influenzae (strain PittEE).